The primary structure comprises 280 residues: Dolichyl-diphosphooligosaccharide--protein glycosyltransferase subunit 2 (280 aa).

A signal peptide spans 1–16 (MKLLLVLLTIASVALA). The Lumenal portion of the chain corresponds to 17-187 (AVDDVAVNNF…FRQPEKRPSA (171 aa)). The helical transmembrane segment at 188 to 208 (LISDLFTIICLSPLLILVVLW) threads the bilayer. Topologically, residues 209–222 (SQVGINFQNAPASP) are cytoplasmic. Residues 223–243 (WVPIFHVGLIGIFGIYFMFWV) form a helical membrane-spanning segment. Residue Q244 is a topological domain, lumenal. Residues 245-265 (FDMFVTLKYLAVLGFLTFVAG) form a helical membrane-spanning segment. The Cytoplasmic segment spans residues 266–280 (NRVLRAISESKQKSE).

Belongs to the SWP1 family. Component of the oligosaccharyltransferase (OST) complex.

It localises to the endoplasmic reticulum membrane. It participates in protein modification; protein glycosylation. Its function is as follows. Subunit of the oligosaccharyl transferase (OST) complex that catalyzes the initial transfer of a defined glycan (Glc(3)Man(9)GlcNAc(2) in eukaryotes) from the lipid carrier dolichol-pyrophosphate to an asparagine residue within an Asn-X-Ser/Thr consensus motif in nascent polypeptide chains, the first step in protein N-glycosylation. N-glycosylation occurs cotranslationally and the complex associates with the Sec61 complex at the channel-forming translocon complex that mediates protein translocation across the endoplasmic reticulum (ER). All subunits are required for a maximal enzyme activity. This is Dolichyl-diphosphooligosaccharide--protein glycosyltransferase subunit 2 from Caenorhabditis elegans.